Reading from the N-terminus, the 581-residue chain is Penicillin-binding protein activator LpoA (581 aa).

The N-terminal stretch at 1 to 26 (MLSILMQGLRLKKCFLPILVMFFLAG) is a signal peptide. Residue C27 is the site of N-palmitoyl cysteine attachment. C27 carries the S-diacylglycerol cysteine lipid modification.

Belongs to the LpoA family. In terms of assembly, interacts with PBP1a.

It is found in the cell outer membrane. In terms of biological role, regulator of peptidoglycan synthesis that is essential for the function of penicillin-binding protein 1A (PBP1a). This chain is Penicillin-binding protein activator LpoA, found in Histophilus somni (strain 129Pt) (Haemophilus somnus).